Consider the following 669-residue polypeptide: DNA ligase (669 aa).

NAD(+) is bound by residues 34 to 38, 83 to 84, and E114; these read DAEYD and SL. The active-site N6-AMP-lysine intermediate is K116. Positions 137, 171, 287, and 311 each coordinate NAD(+). Zn(2+) contacts are provided by C405, C408, C423, and C428. The region spanning 591 to 669 is the BRCT domain; that stretch reads NVESYFAGKT…EERFLQELNK (79 aa).

Belongs to the NAD-dependent DNA ligase family. LigA subfamily. Mg(2+) is required as a cofactor. It depends on Mn(2+) as a cofactor.

The catalysed reaction is NAD(+) + (deoxyribonucleotide)n-3'-hydroxyl + 5'-phospho-(deoxyribonucleotide)m = (deoxyribonucleotide)n+m + AMP + beta-nicotinamide D-nucleotide.. In terms of biological role, DNA ligase that catalyzes the formation of phosphodiester linkages between 5'-phosphoryl and 3'-hydroxyl groups in double-stranded DNA using NAD as a coenzyme and as the energy source for the reaction. It is essential for DNA replication and repair of damaged DNA. This chain is DNA ligase, found in Bacillus cereus (strain ATCC 14579 / DSM 31 / CCUG 7414 / JCM 2152 / NBRC 15305 / NCIMB 9373 / NCTC 2599 / NRRL B-3711).